An 803-amino-acid chain; its full sequence is Cation channel sperm-associated auxiliary subunit delta (803 aa).

The N-terminal stretch at 1–15 (MLMLMLAAVATVVRA) is a signal peptide. Residues 16 to 720 (QTVCRFRTVR…ALPVAEFRPM (705 aa)) lie on the Extracellular side of the membrane. 7 disulfides stabilise this stretch: cysteine 19-cysteine 365, cysteine 55-cysteine 142, cysteine 141-cysteine 148, cysteine 383-cysteine 492, cysteine 506-cysteine 698, cysteine 521-cysteine 568, and cysteine 620-cysteine 648. Residues asparagine 226, asparagine 418, asparagine 436, asparagine 468, asparagine 534, asparagine 545, and asparagine 626 are each glycosylated (N-linked (GlcNAc...) asparagine). A helical transmembrane segment spans residues 721 to 742 (TSILLMVTVTLFTMWLAYAIPK). Residues 743–803 (QLRTERGRRL…QIGKKPDIKK (61 aa)) lie on the Cytoplasmic side of the membrane. The disordered stretch occupies residues 782 to 803 (SRRVKDQPEKIPQIGKKPDIKK).

The protein belongs to the CATSPERD family. As to quaternary structure, component of the CatSper complex or CatSpermasome composed of the core pore-forming members CATSPER1, CATSPER2, CATSPER3 and CATSPER4 as well as auxiliary members CATSPERB, CATSPERG, CATSPERD, CATSPERE, CATSPERZ, C2CD6/CATSPERT, SLCO6C1, TMEM249, TMEM262 and EFCAB9. HSPA1 may be an additional auxiliary complex member. The core complex members CATSPER1, CATSPER2, CATSPER3 and CATSPER4 form a heterotetrameric channel. The auxiliary CATSPERB, CATSPERG, CATSPERD and CATSPERE subunits form a pavilion-like structure over the pore which stabilizes the complex through interactions with CATSPER4, CATSPER3, CATSPER1 and CATSPER2 respectively. SLCO6C1 interacts with CATSPERE and TMEM262/CATSPERH interacts with CATSPERB, further stabilizing the complex. C2CD6/CATSPERT interacts at least with CATSPERD and is required for targeting the CatSper complex in the flagellar membrane.

The protein localises to the cell projection. The protein resides in the cilium. It localises to the flagellum membrane. Its function is as follows. Auxiliary component of the CatSper complex, a complex involved in sperm cell hyperactivation. Sperm cell hyperactivation is needed for sperm motility which is essential late in the preparation of sperm for fertilization. Required for CATSPER1 stability before intraflagellar transport and/or incorporation of the CatSper complex channel into the flagellar membrane. This is Cation channel sperm-associated auxiliary subunit delta from Rattus norvegicus (Rat).